The following is a 233-amino-acid chain: Purine nucleoside phosphorylase DeoD-type (233 aa).

Histidine 4 contributes to the a purine D-ribonucleoside binding site. Residues glycine 20, arginine 24, arginine 43, and 87-90 (RVGT) each bind phosphate. A purine D-ribonucleoside is bound by residues 178–180 (EME) and 202–203 (SD). The active-site Proton donor is aspartate 203.

This sequence belongs to the PNP/UDP phosphorylase family. Homohexamer; trimer of homodimers.

The catalysed reaction is a purine D-ribonucleoside + phosphate = a purine nucleobase + alpha-D-ribose 1-phosphate. It carries out the reaction a purine 2'-deoxy-D-ribonucleoside + phosphate = a purine nucleobase + 2-deoxy-alpha-D-ribose 1-phosphate. Its function is as follows. Catalyzes the reversible phosphorolytic breakdown of the N-glycosidic bond in the beta-(deoxy)ribonucleoside molecules, with the formation of the corresponding free purine bases and pentose-1-phosphate. The sequence is that of Purine nucleoside phosphorylase DeoD-type from Listeria innocua serovar 6a (strain ATCC BAA-680 / CLIP 11262).